A 503-amino-acid polypeptide reads, in one-letter code: Probable cytosol aminopeptidase (503 aa).

Mn(2+) is bound by residues lysine 271 and aspartate 276. Lysine 283 is a catalytic residue. Positions 294, 353, and 355 each coordinate Mn(2+). Arginine 357 is an active-site residue.

It belongs to the peptidase M17 family. It depends on Mn(2+) as a cofactor.

Its subcellular location is the cytoplasm. It catalyses the reaction Release of an N-terminal amino acid, Xaa-|-Yaa-, in which Xaa is preferably Leu, but may be other amino acids including Pro although not Arg or Lys, and Yaa may be Pro. Amino acid amides and methyl esters are also readily hydrolyzed, but rates on arylamides are exceedingly low.. The enzyme catalyses Release of an N-terminal amino acid, preferentially leucine, but not glutamic or aspartic acids.. In terms of biological role, presumably involved in the processing and regular turnover of intracellular proteins. Catalyzes the removal of unsubstituted N-terminal amino acids from various peptides. The sequence is that of Probable cytosol aminopeptidase from Chlorobaculum parvum (strain DSM 263 / NCIMB 8327) (Chlorobium vibrioforme subsp. thiosulfatophilum).